The following is a 201-amino-acid chain: Small ribosomal subunit protein uS4c (201 aa).

Positions 15 to 43 (LGALPGLTSKRPRSGSDLRNQSRSGKRSQ) are disordered. The S4 RNA-binding domain maps to 89–150 (MRLDNILFRL…KERSRALIQN (62 aa)).

The protein belongs to the universal ribosomal protein uS4 family. In terms of assembly, part of the 30S ribosomal subunit. Contacts protein S5. The interaction surface between S4 and S5 is involved in control of translational fidelity.

The protein localises to the plastid. Its subcellular location is the chloroplast. Its function is as follows. One of the primary rRNA binding proteins, it binds directly to 16S rRNA where it nucleates assembly of the body of the 30S subunit. In terms of biological role, with S5 and S12 plays an important role in translational accuracy. In Amborella trichopoda, this protein is Small ribosomal subunit protein uS4c (rps4).